We begin with the raw amino-acid sequence, 130 residues long: Small ribosomal subunit protein uS8 (130 aa).

This sequence belongs to the universal ribosomal protein uS8 family. As to quaternary structure, part of the 30S ribosomal subunit. Contacts proteins S5 and S12.

Its function is as follows. One of the primary rRNA binding proteins, it binds directly to 16S rRNA central domain where it helps coordinate assembly of the platform of the 30S subunit. This Shewanella frigidimarina (strain NCIMB 400) protein is Small ribosomal subunit protein uS8.